An 82-amino-acid chain; its full sequence is Photosystem I iron-sulfur center (82 aa).

4Fe-4S ferredoxin-type domains follow at residues 2-31 (AHTV…MVPW) and 40-69 (IAAA…IRVY). Positions 11, 14, 17, 21, 49, 52, 55, and 59 each coordinate [4Fe-4S] cluster.

As to quaternary structure, the cyanobacterial PSI reaction center is composed of one copy each of PsaA,B,C,D,E,F,I,J,K,L,M and X, and forms trimeric complexes. [4Fe-4S] cluster is required as a cofactor.

It is found in the cellular thylakoid membrane. The enzyme catalyses reduced [plastocyanin] + hnu + oxidized [2Fe-2S]-[ferredoxin] = oxidized [plastocyanin] + reduced [2Fe-2S]-[ferredoxin]. Apoprotein for the two 4Fe-4S centers FA and FB of photosystem I (PSI); essential for photochemical activity. FB is the terminal electron acceptor of PSI, donating electrons to ferredoxin. The C-terminus interacts with PsaA/B/D and helps assemble the protein into the PSI complex. Required for binding of PsaD and PsaE to PSI. PSI is a plastocyanin/cytochrome c6-ferredoxin oxidoreductase, converting photonic excitation into a charge separation, which transfers an electron from the donor P700 chlorophyll pair to the spectroscopically characterized acceptors A0, A1, FX, FA and FB in turn. This Synechococcus sp. (strain JA-3-3Ab) (Cyanobacteria bacterium Yellowstone A-Prime) protein is Photosystem I iron-sulfur center.